Here is a 91-residue protein sequence, read N- to C-terminus: UPF0358 protein SERP0701 (91 aa).

This sequence belongs to the UPF0358 family.

This chain is UPF0358 protein SERP0701, found in Staphylococcus epidermidis (strain ATCC 35984 / DSM 28319 / BCRC 17069 / CCUG 31568 / BM 3577 / RP62A).